The chain runs to 514 residues: Proline--tRNA ligase (514 aa).

It belongs to the class-II aminoacyl-tRNA synthetase family. ProS type 3 subfamily. As to quaternary structure, homodimer.

The protein localises to the cytoplasm. It catalyses the reaction tRNA(Pro) + L-proline + ATP = L-prolyl-tRNA(Pro) + AMP + diphosphate. Catalyzes the attachment of proline to tRNA(Pro) in a two-step reaction: proline is first activated by ATP to form Pro-AMP and then transferred to the acceptor end of tRNA(Pro). The chain is Proline--tRNA ligase from Erythrobacter litoralis (strain HTCC2594).